Here is a 486-residue protein sequence, read N- to C-terminus: Protein nucleotidyltransferase YdiU (486 aa).

ATP is bound by residues glycine 89, glycine 91, arginine 92, lysine 112, aspartate 124, glycine 125, arginine 175, and arginine 182. Aspartate 251 acts as the Proton acceptor in catalysis. Mg(2+) contacts are provided by asparagine 252 and aspartate 261. Aspartate 261 contacts ATP.

It belongs to the SELO family. Mg(2+) is required as a cofactor. The cofactor is Mn(2+).

The enzyme catalyses L-seryl-[protein] + ATP = 3-O-(5'-adenylyl)-L-seryl-[protein] + diphosphate. It carries out the reaction L-threonyl-[protein] + ATP = 3-O-(5'-adenylyl)-L-threonyl-[protein] + diphosphate. The catalysed reaction is L-tyrosyl-[protein] + ATP = O-(5'-adenylyl)-L-tyrosyl-[protein] + diphosphate. It catalyses the reaction L-histidyl-[protein] + UTP = N(tele)-(5'-uridylyl)-L-histidyl-[protein] + diphosphate. The enzyme catalyses L-seryl-[protein] + UTP = O-(5'-uridylyl)-L-seryl-[protein] + diphosphate. It carries out the reaction L-tyrosyl-[protein] + UTP = O-(5'-uridylyl)-L-tyrosyl-[protein] + diphosphate. Nucleotidyltransferase involved in the post-translational modification of proteins. It can catalyze the addition of adenosine monophosphate (AMP) or uridine monophosphate (UMP) to a protein, resulting in modifications known as AMPylation and UMPylation. In Shouchella clausii (strain KSM-K16) (Alkalihalobacillus clausii), this protein is Protein nucleotidyltransferase YdiU.